We begin with the raw amino-acid sequence, 624 residues long: MTTMESLIGLVNRIQRACTVLGDYGGGTGSNAFNSLWEALPTVAVVGGQSSGKSSVLESIVGRDFLPRGSGIVTRRPLVLQLHKTDDGTEEYAEFLHLPKKQFTDFALVRREIQDETDRITGKNKQISPVPIHLSIYSPNVVNLTLIDLPGLTKVAVEGQPETIAEDIESMVRTYVDKPNCIILAISPANQDIATSDAIKLAKDVDPTGERTFGVLTKLDLMDKGTNALEVLEGRSYRLQHPWVGIVNRSQADINKNVDMMLARRKEREYFDTSPDYGHLASKMGSEYLAKLLSKHLESVIRTRIPSILSLINKSIEELERELDRMGRPVAVDAGAQLYTILEMCRAFDKIFKEHLDGGRPGGDRIYGVFDNQLPAALKKLPFDRHLSLQSVKKIVSEADGYQPHLIAPEQGYRRLIEGALGYFRGPAEASVDAVHYVLKELVRKSISETEELKRFPSLQVELAAAANSSLEKFREESKKSVIRLVDMESAYLTAEFFRKLPQEIERPVTNSKNQTASPSSATLDQYGDGHFRRIASNVSAYVNMVSDTLRNTIPKACVYCQVRQAKLALLNYFYSQISKREGKQLGQLLDEDPALMDRRLECAKRLELYKKARDEIDAVAWVR.

N-acetylthreonine is present on threonine 2. The Dynamin-type G domain maps to 37–306; sequence WEALPTVAVV…LESVIRTRIP (270 aa). Residues 47–54 form a G1 motif region; it reads GGQSSGKS. 50–55 is a GTP binding site; sequence SSGKSS. The G2 motif stretch occupies residues 73 to 75; it reads VTR. A G3 motif region spans residues 148–151; that stretch reads DLPG. The segment at 217-220 is G4 motif; the sequence is TKLD. GTP is bound by residues 218–223 and 248–251; these read KLDLMD and NRSQ. The tract at residues 247 to 250 is G5 motif; that stretch reads VNRS. The region spanning 532–624 is the GED domain; it reads FRRIASNVSA…DEIDAVAWVR (93 aa).

It belongs to the TRAFAC class dynamin-like GTPase superfamily. Dynamin/Fzo/YdjA family. In terms of assembly, forms homodimer and may homooligomerize and heterooligomerize to form the phragmoplastin complex. Binds to PHIP1. As to expression, ubiquitous.

Its subcellular location is the cytoplasm. The protein localises to the cytoskeleton. It is found in the phragmoplast. It catalyses the reaction GTP + H2O = GDP + phosphate + H(+). In terms of biological role, microtubule-associated force-producing protein that is targeted to the tubulo-vesicular network of the forming cell plate during cytokinesis. Also plays a major role in plasma membrane maintenance and cell wall integrity with an implication in vesicular trafficking, polar cell expansion, and other aspects of plant growth and development. Has a GTPase activity. In Arabidopsis thaliana (Mouse-ear cress), this protein is Phragmoplastin DRP1E.